We begin with the raw amino-acid sequence, 274 residues long: Elongation factor Ts (274 aa).

An involved in Mg(2+) ion dislocation from EF-Tu region spans residues 82-85 (TDFV).

The protein belongs to the EF-Ts family.

The protein resides in the cytoplasm. Its function is as follows. Associates with the EF-Tu.GDP complex and induces the exchange of GDP to GTP. It remains bound to the aminoacyl-tRNA.EF-Tu.GTP complex up to the GTP hydrolysis stage on the ribosome. This is Elongation factor Ts from Christiangramia forsetii (strain DSM 17595 / CGMCC 1.15422 / KT0803) (Gramella forsetii).